A 990-amino-acid chain; its full sequence is Storkhead-box protein 1 (990 aa).

Residues 396-408 (TTRHKDSSKEVIG) are compositionally biased toward basic and acidic residues. 4 disordered regions span residues 396-471 (TTRH…VHHL), 562-586 (VAKAPVHPVSDDFRGGPGNYPPRRV), 712-736 (GLSDSEQDQVALSHSDPGAGDDGGC), and 809-832 (LFSNAGESPNPDLSDNPGQNSRIP). Positions 416 to 431 (KSRRRGSSHKGRHKAR) are enriched in basic residues. The span at 809–830 (LFSNAGESPNPDLSDNPGQNSR) shows a compositional bias: polar residues.

Detected in sensory epithelial cells of the inner ear but not in adjacent surrounding tissue (at protein level).

It is found in the nucleus. Its subcellular location is the cytoplasm. It localises to the cytoskeleton. The protein localises to the microtubule organizing center. The protein resides in the centrosome. Involved in regulating the levels of reactive oxidative species and reactive nitrogen species and in mitochondrial homeostasis in the placenta. Required for regulation of inner ear epithelial cell proliferation via the AKT signaling pathway. Involved in cell cycle regulation by binding to the CCNB1 promoter, up-regulating its expression and promoting mitotic entry. Induces phosphorylation of MAPT/tau. The polypeptide is Storkhead-box protein 1 (Mus musculus (Mouse)).